Reading from the N-terminus, the 417-residue chain is Serine hydroxymethyltransferase (417 aa).

(6S)-5,6,7,8-tetrahydrofolate contacts are provided by residues leucine 121 and 125–127 (GHL). Residue lysine 229 is modified to N6-(pyridoxal phosphate)lysine. 355–357 (SPF) provides a ligand contact to (6S)-5,6,7,8-tetrahydrofolate.

This sequence belongs to the SHMT family. As to quaternary structure, homodimer. Pyridoxal 5'-phosphate serves as cofactor.

It is found in the cytoplasm. It catalyses the reaction (6R)-5,10-methylene-5,6,7,8-tetrahydrofolate + glycine + H2O = (6S)-5,6,7,8-tetrahydrofolate + L-serine. The protein operates within one-carbon metabolism; tetrahydrofolate interconversion. It functions in the pathway amino-acid biosynthesis; glycine biosynthesis; glycine from L-serine: step 1/1. Catalyzes the reversible interconversion of serine and glycine with tetrahydrofolate (THF) serving as the one-carbon carrier. This reaction serves as the major source of one-carbon groups required for the biosynthesis of purines, thymidylate, methionine, and other important biomolecules. Also exhibits THF-independent aldolase activity toward beta-hydroxyamino acids, producing glycine and aldehydes, via a retro-aldol mechanism. This Shewanella sp. (strain MR-4) protein is Serine hydroxymethyltransferase.